A 230-amino-acid polypeptide reads, in one-letter code: 3,4-dihydroxy-2-butanone 4-phosphate synthase (230 aa).

D-ribulose 5-phosphate is bound by residues 38 to 39, D43, 151 to 155, and E175; these read RE and RRGHT. Residue E39 participates in Mg(2+) binding. Residue H154 coordinates Mg(2+).

The protein belongs to the DHBP synthase family. In terms of assembly, homodimer. It depends on Mg(2+) as a cofactor. Mn(2+) is required as a cofactor.

The catalysed reaction is D-ribulose 5-phosphate = (2S)-2-hydroxy-3-oxobutyl phosphate + formate + H(+). The protein operates within cofactor biosynthesis; riboflavin biosynthesis; 2-hydroxy-3-oxobutyl phosphate from D-ribulose 5-phosphate: step 1/1. Functionally, catalyzes the conversion of D-ribulose 5-phosphate to formate and 3,4-dihydroxy-2-butanone 4-phosphate. This chain is 3,4-dihydroxy-2-butanone 4-phosphate synthase, found in Vibrio harveyi (Beneckea harveyi).